Reading from the N-terminus, the 896-residue chain is Protein translocase subunit SecA (896 aa).

Residues Gln87, 105–109, and Asp512 contribute to the ATP site; that span reads GEGKT. Disordered stretches follow at residues 565–584 and 840–896; these read RRID…PGSS and EAAQ…AHEA. Zn(2+) contacts are provided by Cys876, Cys878, Cys887, and His888. The segment covering 882 to 896 has biased composition (basic residues); the sequence is KKYKHCHGNRAAHEA.

It belongs to the SecA family. Monomer and homodimer. Part of the essential Sec protein translocation apparatus which comprises SecA, SecYEG and auxiliary proteins SecDF-YajC and YidC. Requires Zn(2+) as cofactor.

The protein localises to the cell inner membrane. Its subcellular location is the cytoplasm. It catalyses the reaction ATP + H2O + cellular proteinSide 1 = ADP + phosphate + cellular proteinSide 2.. Part of the Sec protein translocase complex. Interacts with the SecYEG preprotein conducting channel. Has a central role in coupling the hydrolysis of ATP to the transfer of proteins into and across the cell membrane, serving both as a receptor for the preprotein-SecB complex and as an ATP-driven molecular motor driving the stepwise translocation of polypeptide chains across the membrane. The polypeptide is Protein translocase subunit SecA (Mannheimia succiniciproducens (strain KCTC 0769BP / MBEL55E)).